A 294-amino-acid chain; its full sequence is Acetylglutamate kinase (294 aa).

Substrate contacts are provided by residues Gly67 to Gly68, Arg89, and Asn193.

Belongs to the acetylglutamate kinase family. ArgB subfamily.

The protein localises to the cytoplasm. The catalysed reaction is N-acetyl-L-glutamate + ATP = N-acetyl-L-glutamyl 5-phosphate + ADP. Its pathway is amino-acid biosynthesis; L-arginine biosynthesis; N(2)-acetyl-L-ornithine from L-glutamate: step 2/4. In terms of biological role, catalyzes the ATP-dependent phosphorylation of N-acetyl-L-glutamate. This chain is Acetylglutamate kinase, found in Leptospira interrogans serogroup Icterohaemorrhagiae serovar copenhageni (strain Fiocruz L1-130).